The sequence spans 315 residues: uncharacterized protein (315 aa).

The next 3 membrane-spanning stretches (helical) occupy residues 18–38, 202–222, and 244–264; these read IWFIIFYLFVIQALGSAIISG, ILAIAMFIVIWPVTMGILAGI, and LIYAVVIAFVCTPVAIIVIVL. The segment at 288–315 is disordered; the sequence is VCSTGNRSSGSTDQDISTTKQQSQEAVA.

Its subcellular location is the membrane. This is an uncharacterized protein from Saccharomyces cerevisiae (strain ATCC 204508 / S288c) (Baker's yeast).